The following is a 521-amino-acid chain: U4/U6 small nuclear ribonucleoprotein Prp4 (521 aa).

Lysine 26 is subject to N6-acetyllysine. WD repeat units lie at residues 229 to 268 (DDRP…LHTL), 271 to 318 (HNTN…VADI), 321 to 360 (HTVR…ILHQ), 363 to 402 (HSMG…IMFL), 405 to 444 (HLKE…VYTI), 447 to 487 (HQNL…LKTL), and 490 to 521 (HEGK…WMAE).

In terms of assembly, component of the precatalytic spliceosome (spliceosome B complex). Component of the U4/U6-U5 tri-snRNP complex, a building block of the precatalytic spliceosome (spliceosome B complex). The U4/U6-U5 tri-snRNP complex is composed of the U4, U6 and U5 snRNAs and at least PRPF3, PRPF4, PRPF6, PRPF8, PRPF31, SNRNP200, TXNL4A, SNRNP40, SNRPB, SNRPD1, SNRPD2, SNRPD3, SNRPE, SNRPF, SNRPG, DDX23, CD2BP2, PPIH, SNU13, EFTUD2, SART1 and USP39, plus LSM2, LSM3, LSM4, LSM5, LSM6, LSM7 and LSM8. Interacts directly with PRPF18, PPIH and PRPF3. Part of a heteromeric complex containing PPIH, PRPF3 and PRPF4 that is stable in the absence of RNA. Interacts with ERCC6.

It localises to the nucleus. The protein resides in the nucleus speckle. In terms of biological role, plays a role in pre-mRNA splicing as component of the U4/U6-U5 tri-snRNP complex that is involved in spliceosome assembly, and as component of the precatalytic spliceosome (spliceosome B complex). The sequence is that of U4/U6 small nuclear ribonucleoprotein Prp4 (PRPF4) from Bos taurus (Bovine).